The chain runs to 122 residues: UPF0382 membrane protein SAB0533 (122 aa).

A run of 4 helical transmembrane segments spans residues 3 to 23 (LFII…AFGA), 46 to 66 (MYHG…SINV), 69 to 89 (AGWL…ILVL), and 98 to 118 (ITPI…IATF).

This sequence belongs to the UPF0382 family.

The protein localises to the cell membrane. This is UPF0382 membrane protein SAB0533 from Staphylococcus aureus (strain bovine RF122 / ET3-1).